The following is a 504-amino-acid chain: D-alanine--D-alanyl carrier protein ligase (504 aa).

An ATP-binding site is contributed by 152 to 153 (TS). D-alanine is bound at residue Asp-197. Residue 292–297 (NTYGPT) participates in ATP binding. Residue Val-301 coordinates D-alanine. ATP is bound by residues Asp-383, 394-397 (YNGR), and Lys-492. Lys-492 lines the D-alanine pocket.

Belongs to the ATP-dependent AMP-binding enzyme family. DltA subfamily.

The protein localises to the cytoplasm. It catalyses the reaction holo-[D-alanyl-carrier protein] + D-alanine + ATP = D-alanyl-[D-alanyl-carrier protein] + AMP + diphosphate. It functions in the pathway cell wall biogenesis; lipoteichoic acid biosynthesis. Its function is as follows. Catalyzes the first step in the D-alanylation of lipoteichoic acid (LTA), the activation of D-alanine and its transfer onto the D-alanyl carrier protein (Dcp) DltC. In an ATP-dependent two-step reaction, forms a high energy D-alanyl-AMP intermediate, followed by transfer of the D-alanyl residue as a thiol ester to the phosphopantheinyl prosthetic group of the Dcp. D-alanylation of LTA plays an important role in modulating the properties of the cell wall in Gram-positive bacteria, influencing the net charge of the cell wall. This chain is D-alanine--D-alanyl carrier protein ligase, found in Bacillus cytotoxicus (strain DSM 22905 / CIP 110041 / 391-98 / NVH 391-98).